The sequence spans 78 residues: Sec-independent protein translocase protein TatA (78 aa).

Residues 1–21 traverse the membrane as a helical segment; the sequence is MGSLSIWHWIVVLAVVLLLFG. The interval 43–78 is disordered; that stretch reads LAEDDEPAKTPAAPPEAPRPLPHQTSSAAEAEKKPV. The span at 54-63 shows a compositional bias: pro residues; that stretch reads AAPPEAPRPL.

This sequence belongs to the TatA/E family. As to quaternary structure, the Tat system comprises two distinct complexes: a TatABC complex, containing multiple copies of TatA, TatB and TatC subunits, and a separate TatA complex, containing only TatA subunits. Substrates initially bind to the TatABC complex, which probably triggers association of the separate TatA complex to form the active translocon.

The protein localises to the cell inner membrane. In terms of biological role, part of the twin-arginine translocation (Tat) system that transports large folded proteins containing a characteristic twin-arginine motif in their signal peptide across membranes. TatA could form the protein-conducting channel of the Tat system. The chain is Sec-independent protein translocase protein TatA from Xanthobacter autotrophicus (strain ATCC BAA-1158 / Py2).